Reading from the N-terminus, the 317-residue chain is Ribosomal protein L11 methyltransferase (317 aa).

Residues T158, G179, D201, and N244 each coordinate S-adenosyl-L-methionine.

This sequence belongs to the methyltransferase superfamily. PrmA family.

It localises to the cytoplasm. It catalyses the reaction L-lysyl-[protein] + 3 S-adenosyl-L-methionine = N(6),N(6),N(6)-trimethyl-L-lysyl-[protein] + 3 S-adenosyl-L-homocysteine + 3 H(+). Functionally, methylates ribosomal protein L11. The protein is Ribosomal protein L11 methyltransferase of Streptococcus pyogenes serotype M3 (strain ATCC BAA-595 / MGAS315).